Here is a 446-residue protein sequence, read N- to C-terminus: Histidine--tRNA ligase (446 aa).

The protein belongs to the class-II aminoacyl-tRNA synthetase family. Homodimer.

The protein resides in the cytoplasm. It carries out the reaction tRNA(His) + L-histidine + ATP = L-histidyl-tRNA(His) + AMP + diphosphate + H(+). This Burkholderia pseudomallei (strain K96243) protein is Histidine--tRNA ligase.